The following is a 267-amino-acid chain: DNA repair protein RecO (267 aa).

The protein belongs to the RecO family.

Functionally, involved in DNA repair and RecF pathway recombination. This Prochlorococcus marinus (strain MIT 9303) protein is DNA repair protein RecO.